Here is a 1675-residue protein sequence, read N- to C-terminus: Clathrin heavy chain 1 (1675 aa).

Residue A2 is modified to N-acetylalanine. The tract at residues 2–479 is globular terminal domain; sequence AQILPIRFQE…VDPTLALSVY (478 aa). WD40-like repeat stretches follow at residues 24–67, 68–107, 108–149, 150–195, 196–257, 258–301, and 302–330; these read NIGF…RPIS, ADSA…MTDD, VTFW…SSLA, GCQI…QPIE, GHAA…PEAQ, NDFP…ISGE, and TIFV…VCVE. Residue S67 is modified to Phosphoserine. A Phosphothreonine modification is found at T105. Y184 is subject to Phosphotyrosine. At T394 the chain carries Phosphothreonine. A binding site for the uncoating ATPase, involved in lattice disassembly region spans residues 449 to 465; that stretch reads EKWLKEDKLECSEELGD. A flexible linker region spans residues 480 to 523; that stretch reads LRANVPNKVIQCFAETGQVQKIVLYAKKVGYTPDWIFLLRNVMR. Residues 524-634 form a distal segment region; sequence ISPDQGQQFA…RALEHFTDLY (111 aa). The heavy chain arm stretch occupies residues 524–1675; sequence ISPDQGQQFA…QPQPGFGYSM (1152 aa). CHCR repeat units follow at residues 537-683, 686-828, 833-972, 979-1124, 1128-1269, 1274-1420, and 1423-1566; these read VQDE…QICV, ASKY…SEDV, ILVV…PLID, LSET…VKEA, YIKA…FRLA, LHIV…LLLN, and LMVL…RECF. At Y634 the chain carries Phosphotyrosine. The proximal segment stretch occupies residues 639-1675; sequence AVVHTHLLNP…QPQPGFGYSM (1037 aa). N6-succinyllysine is present on K737. Residue K856 is modified to N6-acetyllysine. Y899 is subject to Phosphotyrosine. S1167 carries the phosphoserine modification. Y1206 carries the phosphotyrosine modification. Residues 1213–1522 are involved in binding clathrin light chain; it reads AAKLLYNNVS…YLFKGNNRWK (310 aa). S1229 is subject to Phosphoserine. An N6-acetyllysine; alternate modification is found at K1441. Residue K1441 is modified to N6-succinyllysine; alternate. 2 positions are modified to phosphotyrosine: Y1477 and Y1487. S1494 bears the Phosphoserine mark. Position 1501 is an N6-acetyllysine (K1501). The segment at 1550-1675 is trimerization; it reads AEELLQWFLQ…QPQPGFGYSM (126 aa).

It belongs to the clathrin heavy chain family. In terms of assembly, clathrin triskelions, composed of 3 heavy chains and 3 light chains, are the basic subunits of the clathrin coat. In the presence of light chains, hub assembly is influenced by both the pH and the concentration of calcium. Interacts with HIP1. Interacts with DENND1A, DENND1B and DENND1C. Interacts with ERBB2. Interacts with FKBP6. Interacts with OCRL. Interacts with CKAP5 and TACC3 forming the TACC3/ch-TOG/clathrin complex located at spindle inter-microtubules bridges; the complex implicates clathrin triskelions; TACC3 and CLTC are proposed to form a composite microtubule interaction surface. Plays a role in early autophagosome formation. Interacts with ATG16L1 (via N-terminus). Interacts with RFTN1; the interaction occurs in response to pathogens. Interacts with USP2 isoform 2. Interacts with TMEM106B (via N-terminus). Interacts with DNAJC6; this interaction produces a local change in heavy-chain contacts, creating a detectable global distortion of the clathrin coat and leads to the recruitment of HSPA8.

It is found in the cytoplasmic vesicle membrane. It localises to the membrane. Its subcellular location is the coated pit. The protein localises to the melanosome. The protein resides in the cytoplasm. It is found in the cytoskeleton. It localises to the spindle. In terms of biological role, clathrin is the major protein of the polyhedral coat of coated pits and vesicles. Two different adapter protein complexes link the clathrin lattice either to the plasma membrane or to the trans-Golgi network. Acts as a component of the TACC3/ch-TOG/clathrin complex proposed to contribute to stabilization of kinetochore fibers of the mitotic spindle by acting as inter-microtubule bridge. The TACC3/ch-TOG/clathrin complex is required for the maintenance of kinetochore fiber tension. Plays a role in early autophagosome formation. Interaction with DNAJC6 mediates the recruitment of HSPA8 to the clathrin lattice and creates local destabilization of the lattice promoting uncoating. In Mus musculus (Mouse), this protein is Clathrin heavy chain 1.